Reading from the N-terminus, the 352-residue chain is Small ribosomal subunit biogenesis GTPase RsgA (352 aa).

One can recognise a CP-type G domain in the interval 109 to 277 (DTVLKRPDMY…LIDSPGIREF (169 aa)). GTP contacts are provided by residues 165–168 (NKAD) and 219–227 (GQSGVGKSS). Residues Cys-301, Cys-306, His-308, and Cys-314 each coordinate Zn(2+).

This sequence belongs to the TRAFAC class YlqF/YawG GTPase family. RsgA subfamily. In terms of assembly, monomer. Associates with 30S ribosomal subunit, binds 16S rRNA. Zn(2+) is required as a cofactor.

Its subcellular location is the cytoplasm. One of several proteins that assist in the late maturation steps of the functional core of the 30S ribosomal subunit. Helps release RbfA from mature subunits. May play a role in the assembly of ribosomal proteins into the subunit. Circularly permuted GTPase that catalyzes slow GTP hydrolysis, GTPase activity is stimulated by the 30S ribosomal subunit. The polypeptide is Small ribosomal subunit biogenesis GTPase RsgA (Alcanivorax borkumensis (strain ATCC 700651 / DSM 11573 / NCIMB 13689 / SK2)).